A 147-amino-acid polypeptide reads, in one-letter code: Large ribosomal subunit protein bL9 (147 aa).

This sequence belongs to the bacterial ribosomal protein bL9 family.

Binds to the 23S rRNA. This Bdellovibrio bacteriovorus (strain ATCC 15356 / DSM 50701 / NCIMB 9529 / HD100) protein is Large ribosomal subunit protein bL9.